We begin with the raw amino-acid sequence, 293 residues long: MDKKRYELNVQLAQMLKGGVIMDVTNVEQARIAEDAGAVAVMALERVPADIRAQGGVARMSDPSMIVEIKKSVSIPVMAKARIGHFVEAQILEALKIDYIDESEVLTPADEECHIDKTRFSIPFVCGARNLGEALRRIAEGAAMIRTKGEAGTGNVVEAVRHMRTMNREIRQLVGMPVEEVTVFAKSNGIPYELALQVRGLGRLPVVNFAAGGIATPADAALMMQLGCDGVFVGSGIFKSSNPDRRARAIVKATAYFNDAAKVLEASLDLGEAMPVLEIAQIPEDQILATRGW.

D23 contributes to the D-ribose 5-phosphate binding site. The active-site Schiff-base intermediate with D-ribose 5-phosphate is the K80. G152 contributes to the D-ribose 5-phosphate binding site. A D-glyceraldehyde 3-phosphate-binding site is contributed by R164. D-ribose 5-phosphate contacts are provided by residues G213 and 234–235 (GS).

It belongs to the PdxS/SNZ family. In terms of assembly, in the presence of PdxT, forms a dodecamer of heterodimers.

The enzyme catalyses aldehydo-D-ribose 5-phosphate + D-glyceraldehyde 3-phosphate + L-glutamine = pyridoxal 5'-phosphate + L-glutamate + phosphate + 3 H2O + H(+). Its pathway is cofactor biosynthesis; pyridoxal 5'-phosphate biosynthesis. In terms of biological role, catalyzes the formation of pyridoxal 5'-phosphate from ribose 5-phosphate (RBP), glyceraldehyde 3-phosphate (G3P) and ammonia. The ammonia is provided by the PdxT subunit. Can also use ribulose 5-phosphate and dihydroxyacetone phosphate as substrates, resulting from enzyme-catalyzed isomerization of RBP and G3P, respectively. This chain is Pyridoxal 5'-phosphate synthase subunit PdxS, found in Syntrophus aciditrophicus (strain SB).